The following is a 480-amino-acid chain: MASPAPEEHATQGCPATEEQEPRPGVPGEEAGPEGAGPQVEEAAGRVAAALTWLLGEPVLWLGWRADELLSWKRPLRSLLAFLGANLLFWFLALTPWRVYHLISVMILGRVIMQIIKDMVLSRARGAQLWRSLSESWEVINSKPDERPRLSHCIAESWMNFSIFLQEMSLFKQQSPGKFCLLVCSVCTFFTILGSYIPGVILSYLLLLFAFLCPLFKCNDIGQKIYSKVKSILLKLDFGIGEYINQKKRERSEADKEKSHKDDSEIDFSALCPKISLTVAAKELSVSDTDVSEVSWTDNGTFNLSEGYTPQTDTSDDLDRPSEEVFSRDLSDFPSLENGAGTNDEDELSLGLPTELKTKKQQLNSAHRPSKDRQSAAGLSLPLKSDQALHLMSNLAGDVITAAMTAAIKDQLEGARQALAQAAPTPGDDTDTEEGDDFELLDQAELDQIESELGLTQDQGAEAQQSKKSSGFLSNLLGGH.

A compositionally biased stretch (basic and acidic residues) spans 1-10; it reads MASPAPEEHA. The tract at residues 1-41 is disordered; it reads MASPAPEEHATQGCPATEEQEPRPGVPGEEAGPEGAGPQVE. Residues 1–43 lie on the Cytoplasmic side of the membrane; that stretch reads MASPAPEEHATQGCPATEEQEPRPGVPGEEAGPEGAGPQVEEA. A helical membrane pass occupies residues 44–64; sequence AGRVAAALTWLLGEPVLWLGW. At 65–78 the chain is on the lumenal side; that stretch reads RADELLSWKRPLRS. Positions 67–216 are reticulon homology domain; sequence DELLSWKRPL…LLFAFLCPLF (150 aa). The chain crosses the membrane as a helical span at residues 79–99; the sequence is LLAFLGANLLFWFLALTPWRV. The Cytoplasmic portion of the chain corresponds to 100-101; the sequence is YH. Residues 102–122 traverse the membrane as a helical segment; sequence LISVMILGRVIMQIIKDMVLS. Over 123 to 191 the chain is Lumenal; sequence RARGAQLWRS…LVCSVCTFFT (69 aa). A Phosphoserine modification is found at Ser132. Phosphoserine; by CAMK2B is present on Ser134. A Phosphoserine modification is found at Ser136. A helical membrane pass occupies residues 192 to 212; sequence ILGSYIPGVILSYLLLLFAFL. Residues 213-480 lie on the Cytoplasmic side of the membrane; sequence CPLFKCNDIG…GFLSNLLGGH (268 aa). Positions 302–313 are enriched in polar residues; sequence FNLSEGYTPQTD. The interval 302–348 is disordered; sequence FNLSEGYTPQTDTSDDLDRPSEEVFSRDLSDFPSLENGAGTNDEDEL. Residues 317–331 show a composition bias toward basic and acidic residues; that stretch reads DLDRPSEEVFSRDLS. Residues 436-441 carry the LIR motif motif; that stretch reads DDFELL. The tract at residues 450-480 is disordered; sequence ESELGLTQDQGAEAQQSKKSSGFLSNLLGGH. The span at 454–473 shows a compositional bias: polar residues; sequence GLTQDQGAEAQQSKKSSGFL.

It belongs to the RETREG family. Homooligomer; oligomerization is enhanced following endoplasmic reticulum stress and is mediated by the reticulon homology domain. Interacts with ATG8 family modifier proteins MAP1LC3A, MAP1LC3B, GABARAP, GABARAPL1 and GABARAPL2. Post-translationally, phosphorylation at Ser-134 by CAMK2B enhances oligomerization and membrane scission and reticulophagy activity.

Its subcellular location is the golgi apparatus. It is found in the cis-Golgi network membrane. The protein localises to the endoplasmic reticulum membrane. In terms of biological role, endoplasmic reticulum (ER)-anchored autophagy regulator which mediates ER delivery into lysosomes through sequestration into autophagosomes. Promotes membrane remodeling and ER scission via its membrane bending capacity and targets the fragments into autophagosomes via interaction with ATG8 family proteins. Active under basal conditions. Required for collagen quality control in a LIR motif-dependent manner. Required for long-term survival of nociceptive and autonomic ganglion neurons. This Rattus norvegicus (Rat) protein is Reticulophagy regulator 1.